A 476-amino-acid polypeptide reads, in one-letter code: Glycogen synthase (476 aa).

ADP-alpha-D-glucose is bound at residue Lys15.

Belongs to the glycosyltransferase 1 family. Bacterial/plant glycogen synthase subfamily.

The catalysed reaction is [(1-&gt;4)-alpha-D-glucosyl](n) + ADP-alpha-D-glucose = [(1-&gt;4)-alpha-D-glucosyl](n+1) + ADP + H(+). The protein operates within glycan biosynthesis; glycogen biosynthesis. Synthesizes alpha-1,4-glucan chains using ADP-glucose. This chain is Glycogen synthase, found in Streptococcus equi subsp. zooepidemicus (strain H70).